The primary structure comprises 398 residues: Cytochrome b (398 aa).

The chain crosses the membrane as a helical span at residues 45–65 (LGSIAGIALVIQIITGVILAM). His95 and His109 together coordinate heme b. A run of 8 helical transmembrane segments spans residues 97–117 (VGASMFFATIYLHIARGLYYG), 129–149 (IGIIIFLIMMATAFMGYVLPW), 164–184 (FSAIPLIGEPIVIWLCGGFSV), 192–212 (FFSLHYLFPFIIVALVILHLL), 245–265 (FVGFGVYFIIFAYFIFYEPNY), 304–324 (LAGVFLMFGSIFVLFLLPWLD), 335–355 (PIYRIAFWIFMADCLFLGYLG), and 364–384 (IIISRFSACYYFCHFLVVLPL). Residues His196 and His210 each coordinate heme b.

Belongs to the cytochrome b family. The main subunits of complex b-c1 are: cytochrome b, cytochrome c1 and the Rieske protein. Heme b serves as cofactor.

It is found in the cell membrane. Functionally, component of the ubiquinol-cytochrome c reductase complex (complex III or cytochrome b-c1 complex), which is a respiratory chain that generates an electrochemical potential coupled to ATP synthesis. This is Cytochrome b (petB) from Rickettsia typhi (strain ATCC VR-144 / Wilmington).